The sequence spans 618 residues: Proline--tRNA ligase (618 aa).

Belongs to the class-II aminoacyl-tRNA synthetase family. ProS type 1 subfamily. As to quaternary structure, homodimer.

It is found in the cytoplasm. The catalysed reaction is tRNA(Pro) + L-proline + ATP = L-prolyl-tRNA(Pro) + AMP + diphosphate. In terms of biological role, catalyzes the attachment of proline to tRNA(Pro) in a two-step reaction: proline is first activated by ATP to form Pro-AMP and then transferred to the acceptor end of tRNA(Pro). As ProRS can inadvertently accommodate and process non-cognate amino acids such as alanine and cysteine, to avoid such errors it has two additional distinct editing activities against alanine. One activity is designated as 'pretransfer' editing and involves the tRNA(Pro)-independent hydrolysis of activated Ala-AMP. The other activity is designated 'posttransfer' editing and involves deacylation of mischarged Ala-tRNA(Pro). The misacylated Cys-tRNA(Pro) is not edited by ProRS. This chain is Proline--tRNA ligase, found in Streptococcus pyogenes serotype M5 (strain Manfredo).